A 104-amino-acid polypeptide reads, in one-letter code: NADH-quinone oxidoreductase subunit K (104 aa).

Transmembrane regions (helical) follow at residues 4–24, 31–51, and 67–87; these read VPAS…LFGA, VIVL…LVAF, and LFTM…LIAL.

The protein belongs to the complex I subunit 4L family. As to quaternary structure, NDH-1 is composed of 14 different subunits. Subunits NuoA, H, J, K, L, M, N constitute the membrane sector of the complex.

The protein localises to the cell membrane. It carries out the reaction a quinone + NADH + 5 H(+)(in) = a quinol + NAD(+) + 4 H(+)(out). NDH-1 shuttles electrons from NADH, via FMN and iron-sulfur (Fe-S) centers, to quinones in the respiratory chain. The immediate electron acceptor for the enzyme in this species is believed to be a menaquinone. Couples the redox reaction to proton translocation (for every two electrons transferred, four hydrogen ions are translocated across the cytoplasmic membrane), and thus conserves the redox energy in a proton gradient. The chain is NADH-quinone oxidoreductase subunit K from Bacillus cereus (strain ATCC 14579 / DSM 31 / CCUG 7414 / JCM 2152 / NBRC 15305 / NCIMB 9373 / NCTC 2599 / NRRL B-3711).